A 749-amino-acid polypeptide reads, in one-letter code: Catalase-peroxidase (749 aa).

The segment covering 1–12 has biased composition (basic and acidic residues); it reads MSSDTSDTRPPH. A disordered region spans residues 1-40; the sequence is MSSDTSDTRPPHSDSGTQSNSESENPIIDSPEPKAHAPLT. Positions 14-24 are enriched in polar residues; it reads DSGTQSNSESE. Residues 113-240 constitute a cross-link (tryptophyl-tyrosyl-methioninium (Trp-Tyr) (with M-266)); sequence WHAAGTYRIF…FGATTMGLIY (128 aa). The Proton acceptor role is filled by His-114. The tryptophyl-tyrosyl-methioninium (Tyr-Met) (with W-113) cross-link spans 240-266; that stretch reads YVNPEGPEGKPDPLAAAHDIRETFGRM. His-281 is a heme b binding site.

This sequence belongs to the peroxidase family. Peroxidase/catalase subfamily. In terms of assembly, homodimer or homotetramer. Heme b serves as cofactor. In terms of processing, formation of the three residue Trp-Tyr-Met cross-link is important for the catalase, but not the peroxidase activity of the enzyme.

The enzyme catalyses H2O2 + AH2 = A + 2 H2O. It catalyses the reaction 2 H2O2 = O2 + 2 H2O. Its function is as follows. Bifunctional enzyme with both catalase and broad-spectrum peroxidase activity. The sequence is that of Catalase-peroxidase from Mycobacterium sp. (strain JLS).